Consider the following 127-residue polypeptide: UPF0325 protein VP2321 (127 aa).

It belongs to the UPF0325 family.

This chain is UPF0325 protein VP2321, found in Vibrio parahaemolyticus serotype O3:K6 (strain RIMD 2210633).